We begin with the raw amino-acid sequence, 132 residues long: UPF0299 membrane protein YohJ (132 aa).

Transmembrane regions (helical) follow at residues 7–27, 31–51, 63–83, and 93–113; these read IIWQ…AGIF, LLPV…VLLA, GCYV…VGVM, and FGPV…VMSW.

The protein belongs to the UPF0299 family.

It localises to the cell inner membrane. The polypeptide is UPF0299 membrane protein YohJ (Shigella dysenteriae serotype 1 (strain Sd197)).